A 731-amino-acid chain; its full sequence is MVVEHPEFLKAGKEPGLQIWRVEKFDLVPVPPNLYGDFFTGDAYVILKTVQLRNGILQYDLHYWLGNECSQDESGAAAIFTVQLDDYLNGRAVQHREVQGFESATFLGYFKSGLKYKKGGVASGFKHVVPNEVVVQRLLQVKGRRVVRATEVPVSWESFNNGDCFILDLGNNIYQWCGSKSNRFERLKATQVSKGIRDNERSGRAQVSVFEEGAEPEAMLQVLGPKPTLPEATEDTVKEDAANRKLAKLYKVSNGAGPMVVSLVADENPFAQGALRSEDCFILDHGKDGKIFVWKGKQANMEERKAALKTASDFISKMDYPKQTQVSVLPEGGETPLFRQFFKNWRDPDQTEGLGLAYLSSHIAHVERVPFDAATLHTSTAMAAQHGMDDDGTGQKQIWRVEGSNKVPVDPATYGQFYGGDSYIILYNYRHGSRQGQIIYNWQGAQSTQDEVAASAILTAQLDEELGGTPVQSRVVQGKEPAHLMSLFGGKPMIVYKGGTSREGGQTAPASTRLFQVRASSSGATRAVEIIPKAGALNSNDAFVLKTPSAAYLWVGAGASEAEKTGAQELLRVLRAQPVQVAEGSEPDSFWEALGGKATYRTSPRLKDKKMDAHPPRLFACSNKIGRFVIEEVPGEFMQEDLATDDVMLLDTWDQVFVWVGKDSQDEEKTEALTSAKRYIDTDPAHRDRRTPITVVKQGFEPPSFVGWFLGWDDSYWSVDPLDRALAELAA.

Residues 2-125 are actin-severing; sequence VVEHPEFLKA…YKKGGVASGF (124 aa). The stretch at 25 to 107 is one Gelsolin-like 1 repeat; it reads FDLVPVPPNL…VQGFESATFL (83 aa). Tyrosine 35 is modified (phosphotyrosine). 6 residues coordinate Ca(2+): glycine 41, aspartate 42, glutamate 73, aspartate 85, glycine 90, and alanine 92. The interval 72–75 is actin-actin interfilament contact point; it reads DESG. A 1,2-diacyl-sn-glycero-3-phospho-(1D-myo-inositol-4,5-bisphosphate) is bound at residue 111 to 118; sequence KSGLKYKK. Valine 121 serves as a coordination point for Ca(2+). 137 to 145 is a binding site for a 1,2-diacyl-sn-glycero-3-phospho-(1D-myo-inositol-4,5-bisphosphate); it reads RLLQVKGRR. One copy of the Gelsolin-like 2 repeat lies at 147–219; that stretch reads VRATEVPVSW…FEEGAEPEAM (73 aa). Residues glycine 162 and aspartate 163 each contribute to the Ca(2+) site. Cysteine 164 and cysteine 177 form a disulfide bridge. Residues glutamate 185, aspartate 235, glutamate 278, aspartate 279, and glutamate 303 each coordinate Ca(2+). A Gelsolin-like 3 repeat occupies 266–338; sequence DENPFAQGAL…LPEGGETPLF (73 aa). 2 positions are modified to phosphotyrosine: tyrosine 358 and tyrosine 414. The actin-binding, Ca-sensitive stretch occupies residues 383 to 731; it reads AAQHGMDDDG…LDRALAELAA (349 aa). One copy of the Gelsolin-like 4 repeat lies at 404–485; that stretch reads SNKVPVDPAT…VQGKEPAHLM (82 aa). Ca(2+)-binding residues include glycine 420, aspartate 421, glutamate 451, aspartate 463, glycine 468, proline 470, and threonine 500. N6-acetyllysine is present on lysine 533. One copy of the Gelsolin-like 5 repeat lies at 533–591; the sequence is KAGALNSNDAFVLKTPSAAYLWVGAGASEAEKTGAQELLRVLRAQPVQVAEGSEPDSFW. Positions 540 and 541 each coordinate Ca(2+). Phosphotyrosine is present on tyrosine 552. Ca(2+) is bound at residue glutamate 563. A Phosphotyrosine modification is found at tyrosine 600. The Gelsolin-like 6 repeat unit spans residues 630 to 705; that stretch reads IEEVPGEFMQ…VKQGFEPPSF (76 aa). Ca(2+)-binding residues include aspartate 645, aspartate 646, and glutamate 668. At threonine 691 the chain carries Phosphothreonine.

The protein belongs to the villin/gelsolin family. In terms of assembly, binds to actin and to fibronectin. Identified in a complex composed of ACTA1, COBL, GSN and TMSB4X. Interacts with the inactive form of EIF2AK2/PKR. Interacts with FLII.

It is found in the cytoplasm. Its subcellular location is the cytoskeleton. Functionally, calcium-regulated, actin-modulating protein that binds to the plus (or barbed) ends of actin monomers or filaments, preventing monomer exchange (end-blocking or capping). It can promote the assembly of monomers into filaments (nucleation) as well as sever filaments already formed. Plays a role in ciliogenesis. This Equus caballus (Horse) protein is Gelsolin (GSN).